The chain runs to 634 residues: MGKVVGIDLGTTNSCVAVMEGGKPTVIANAEGFRTTPSVVAYTKNQDQLVGQIAKRQAVMNPENTFYSAKRFVGRRVDEVNEESKEVSYGIEKAGSNVKLKCPVLDKQFSPEEVSAQVLRKLSEDAGKYLGENITQAVITVPAYFNDSQRQATKDAGKIAGLEVLRIINEPTAAALAYGLDKKSNERILVFDLGGGTFDVSVLEVGDGVFEVLSTSGDTHLGGDDFDRCIVDHLASIFKSNEGIDLRQDKQALQRLTEAAEKAKIELSNATQSEINLPFITATPEGPKHLDLNLTRANFEELASKLIDRCRVPVEQALKDAKLSTGEIDEIVMVGGSTRMPAVQELVKRVTGKDPNQTVNPDEVVAVGAAIQGGVLAGEVKDILLLDVTPLSLGVETLGGVMTKMITRNTTVPTKKSETYSTAVDGQTNVEIHVLQGEREMASDNKSLGTFRLDGIPSAPRGVPQIEVTFDIDANGILSVTAKDKGSGKEQSISITGASTLSDNEVDKMVKDAESNASVDKEKREKIDLKNQAETLVYQTEKQLGELGDKVDASAKAKVEEKSKALKEATSKEDYEAMKKLLEELQQELYAIGSSVYQQPGNQPPAPGTPDSNESNDKGGDDDVIDADFTETKD.

Residue T197 is modified to Phosphothreonine; by autocatalysis. The disordered stretch occupies residues 592–634 (IGSSVYQQPGNQPPAPGTPDSNESNDKGGDDDVIDADFTETKD). Over residues 622-634 (DDVIDADFTETKD) the composition is skewed to acidic residues.

The protein belongs to the heat shock protein 70 family.

Functionally, acts as a chaperone. The polypeptide is Chaperone protein dnaK2 (dnaK2) (Prochlorococcus marinus subsp. pastoris (strain CCMP1986 / NIES-2087 / MED4)).